Here is a 235-residue protein sequence, read N- to C-terminus: Flavonoid 3',5'-methyltransferase (235 aa).

S-adenosyl-L-methionine contacts are provided by residues Val51, Glu73, 75-76 (GV), Ser81, Asp99, and Ala128. Residue Asp151 coordinates a divalent metal cation. Asp153 is a binding site for S-adenosyl-L-methionine. Positions 177 and 178 each coordinate a divalent metal cation.

This sequence belongs to the class I-like SAM-binding methyltransferase superfamily. Cation-dependent O-methyltransferase family. CCoAMT subfamily. The cofactor is a divalent metal cation.

The protein localises to the cytoplasm. The enzyme catalyses S-adenosyl-L-methionine + a 3'-hydroxyflavonoid = S-adenosyl-L-homocysteine + a 3'-methoxyflavonoid.. It catalyses the reaction S-adenosyl-L-methionine + a 5'-hydroxy-3'-methoxyflavonoid = S-adenosyl-L-homocysteine + a 3',5'-dimethoxyflavonoid.. The protein operates within pigment biosynthesis; anthocyanin biosynthesis. Functionally, mediates O-methylation of anthocyanins. Anthocyanins are major pigments in grapes: at ripening initiation in red grapevine berries, the exocarp turns color from green to red and then to purple due to the accumulation and extent of methylation of anthocyanins. Catalyzes both 3' and 5' O-methylation of anthocyanins, with a preference for glycosylated substrates. Active on both anthocyanins and flavonols in vitro. Most active with delphinidin 3-glucoside but also acts on cyanidin 3-glucoside, cyanidin, myricetin, quercetin and quercetin 3-glucoside. Not able to methylate flavan type skeletons with chiral centers, such as catechins or dihydroquercetin. In Vitis vinifera (Grape), this protein is Flavonoid 3',5'-methyltransferase (FAOMT).